Here is a 445-residue protein sequence, read N- to C-terminus: 23S rRNA (uracil(1939)-C(5))-methyltransferase RlmD (445 aa).

The 59-residue stretch at 6-64 (RRLPREPFEIAITGLSHEGRGIAHHDERTLFVHGALPGERVRAVYTKRRRSVAEARVVE) folds into the TRAM domain. [4Fe-4S] cluster contacts are provided by Cys77, Cys83, Cys86, and Cys165. S-adenosyl-L-methionine contacts are provided by Gln274, Phe303, Asn308, Glu324, Asp351, and Asp372. Catalysis depends on Cys398, which acts as the Nucleophile.

It belongs to the class I-like SAM-binding methyltransferase superfamily. RNA M5U methyltransferase family. RlmD subfamily.

The catalysed reaction is uridine(1939) in 23S rRNA + S-adenosyl-L-methionine = 5-methyluridine(1939) in 23S rRNA + S-adenosyl-L-homocysteine + H(+). Functionally, catalyzes the formation of 5-methyl-uridine at position 1939 (m5U1939) in 23S rRNA. The sequence is that of 23S rRNA (uracil(1939)-C(5))-methyltransferase RlmD from Alkalilimnicola ehrlichii (strain ATCC BAA-1101 / DSM 17681 / MLHE-1).